Here is a 520-residue protein sequence, read N- to C-terminus: Bifunctional purine biosynthesis protein PurH (520 aa).

The region spanning 1–146 (MAPVALLSVS…KNHADVAVLT (146 aa)) is the MGS-like domain.

The protein belongs to the PurH family.

The catalysed reaction is (6R)-10-formyltetrahydrofolate + 5-amino-1-(5-phospho-beta-D-ribosyl)imidazole-4-carboxamide = 5-formamido-1-(5-phospho-D-ribosyl)imidazole-4-carboxamide + (6S)-5,6,7,8-tetrahydrofolate. It catalyses the reaction IMP + H2O = 5-formamido-1-(5-phospho-D-ribosyl)imidazole-4-carboxamide. It functions in the pathway purine metabolism; IMP biosynthesis via de novo pathway; 5-formamido-1-(5-phospho-D-ribosyl)imidazole-4-carboxamide from 5-amino-1-(5-phospho-D-ribosyl)imidazole-4-carboxamide (10-formyl THF route): step 1/1. The protein operates within purine metabolism; IMP biosynthesis via de novo pathway; IMP from 5-formamido-1-(5-phospho-D-ribosyl)imidazole-4-carboxamide: step 1/1. This is Bifunctional purine biosynthesis protein PurH from Synechococcus sp. (strain CC9605).